The primary structure comprises 409 residues: S-adenosylmethionine synthase (409 aa).

Histidine 15 lines the ATP pocket. Residue aspartate 17 coordinates Mg(2+). Glutamate 43 serves as a coordination point for K(+). Glutamate 56 and glutamine 100 together coordinate L-methionine. The flexible loop stretch occupies residues 100 to 110; the sequence is QSSDIAQGVNE. ATP is bound by residues 171–173, 248–249, aspartate 257, 263–264, alanine 280, and lysine 284; these read DGK, KF, and RK. Aspartate 257 lines the L-methionine pocket. Lysine 288 serves as a coordination point for L-methionine.

This sequence belongs to the AdoMet synthase family. Homotetramer; dimer of dimers. Requires Mg(2+) as cofactor. K(+) serves as cofactor.

The protein resides in the cytoplasm. The enzyme catalyses L-methionine + ATP + H2O = S-adenosyl-L-methionine + phosphate + diphosphate. The protein operates within amino-acid biosynthesis; S-adenosyl-L-methionine biosynthesis; S-adenosyl-L-methionine from L-methionine: step 1/1. Its function is as follows. Catalyzes the formation of S-adenosylmethionine (AdoMet) from methionine and ATP. The overall synthetic reaction is composed of two sequential steps, AdoMet formation and the subsequent tripolyphosphate hydrolysis which occurs prior to release of AdoMet from the enzyme. The protein is S-adenosylmethionine synthase of Prochlorococcus marinus (strain NATL2A).